Reading from the N-terminus, the 266-residue chain is UPF0294 protein Ent638_0743 (266 aa).

Belongs to the UPF0294 family.

Its subcellular location is the cytoplasm. This Enterobacter sp. (strain 638) protein is UPF0294 protein Ent638_0743.